The primary structure comprises 129 residues: Small ribosomal subunit protein uS11 (129 aa).

It belongs to the universal ribosomal protein uS11 family. Part of the 30S ribosomal subunit. Interacts with proteins S7 and S18. Binds to IF-3.

Located on the platform of the 30S subunit, it bridges several disparate RNA helices of the 16S rRNA. Forms part of the Shine-Dalgarno cleft in the 70S ribosome. The protein is Small ribosomal subunit protein uS11 of Staphylococcus carnosus (strain TM300).